We begin with the raw amino-acid sequence, 220 residues long: DNA-directed RNA polymerase subunit alpha (220 aa).

This sequence belongs to the RNA polymerase alpha chain family. In terms of assembly, in plastids the minimal PEP RNA polymerase catalytic core is composed of four subunits: alpha, beta, beta', and beta''. When a (nuclear-encoded) sigma factor is associated with the core the holoenzyme is formed, which can initiate transcription.

The protein resides in the plastid. The catalysed reaction is RNA(n) + a ribonucleoside 5'-triphosphate = RNA(n+1) + diphosphate. DNA-dependent RNA polymerase catalyzes the transcription of DNA into RNA using the four ribonucleoside triphosphates as substrates. In Euglena longa (Euglenophycean alga), this protein is DNA-directed RNA polymerase subunit alpha (rpoA).